A 337-amino-acid chain; its full sequence is Tetraacyldisaccharide 4'-kinase (337 aa).

Position 72–79 (72–79 (TVGGSGKT)) interacts with ATP.

Belongs to the LpxK family.

It carries out the reaction a lipid A disaccharide + ATP = a lipid IVA + ADP + H(+). It participates in glycolipid biosynthesis; lipid IV(A) biosynthesis; lipid IV(A) from (3R)-3-hydroxytetradecanoyl-[acyl-carrier-protein] and UDP-N-acetyl-alpha-D-glucosamine: step 6/6. Functionally, transfers the gamma-phosphate of ATP to the 4'-position of a tetraacyldisaccharide 1-phosphate intermediate (termed DS-1-P) to form tetraacyldisaccharide 1,4'-bis-phosphate (lipid IVA). In Shewanella sediminis (strain HAW-EB3), this protein is Tetraacyldisaccharide 4'-kinase.